Reading from the N-terminus, the 233-residue chain is Auxin-responsive protein IAA11 (233 aa).

Disordered stretches follow at residues 1–27 (MAGL…RSSG) and 46–100 (PAAV…PKAQ). Positions 11 to 15 (LRLGL) match the EAR-like (transcriptional repression) motif. Positions 54-63 (GAQEDKEDAD) are enriched in acidic residues. Residues 122–217 (AALVKVSMDG…SCKRLRIMKG (96 aa)) form the PB1 domain.

It belongs to the Aux/IAA family. In terms of assembly, homodimers and heterodimers. Highly expressed in etiolated shoots. Expressed in roots.

The protein localises to the nucleus. Functionally, aux/IAA proteins are short-lived transcriptional factors that function as repressors of early auxin response genes at low auxin concentrations. The chain is Auxin-responsive protein IAA11 (IAA11) from Oryza sativa subsp. japonica (Rice).